The chain runs to 61 residues: Large ribosomal subunit protein uL30 (61 aa).

It belongs to the universal ribosomal protein uL30 family. Part of the 50S ribosomal subunit.

This Acidithiobacillus ferrooxidans (strain ATCC 23270 / DSM 14882 / CIP 104768 / NCIMB 8455) (Ferrobacillus ferrooxidans (strain ATCC 23270)) protein is Large ribosomal subunit protein uL30.